A 556-amino-acid chain; its full sequence is Glucomannan 4-beta-mannosyltransferase 7 (556 aa).

A helical transmembrane segment spans residues Val-58–Phe-78. The active site involves Asp-158. 2 residues coordinate substrate: Asp-217 and Asp-219. Asp-311 is an active-site residue. 4 helical membrane passes run Ile-390 to Phe-410, Leu-426 to Phe-448, Leu-502 to Gly-522, and Leu-526 to Gly-546.

It belongs to the glycosyltransferase 2 family. Plant cellulose synthase-like A subfamily. Ubiquitous.

The protein resides in the golgi apparatus membrane. It carries out the reaction GDP-mannose + (glucomannan)n = GDP + (glucomannan)n+1.. Functionally, probable mannan synthase which consists of a 4-beta-mannosyltransferase activity on mannan using GDP-mannose. The beta-1,4-mannan product is the backbone for galactomannan synthesis by galactomannan galactosyltransferase. Galactomannan is a noncellulosic polysaccharides of plant cell wall. Required for synthesis of a cell wall polysaccharide essential for pollen tube growth, for cell wall structure, or for signaling during plant embryo development. The chain is Glucomannan 4-beta-mannosyltransferase 7 from Arabidopsis thaliana (Mouse-ear cress).